The following is a 231-amino-acid chain: Large ribosomal subunit protein uL1 (231 aa).

It belongs to the universal ribosomal protein uL1 family. In terms of assembly, part of the 50S ribosomal subunit.

Its function is as follows. Binds directly to 23S rRNA. The L1 stalk is quite mobile in the ribosome, and is involved in E site tRNA release. In terms of biological role, protein L1 is also a translational repressor protein, it controls the translation of the L11 operon by binding to its mRNA. This chain is Large ribosomal subunit protein uL1, found in Azoarcus sp. (strain BH72).